We begin with the raw amino-acid sequence, 142 residues long: Large ribosomal subunit protein uL13 (142 aa).

It belongs to the universal ribosomal protein uL13 family. As to quaternary structure, part of the 50S ribosomal subunit.

In terms of biological role, this protein is one of the early assembly proteins of the 50S ribosomal subunit, although it is not seen to bind rRNA by itself. It is important during the early stages of 50S assembly. This Burkholderia cenocepacia (strain ATCC BAA-245 / DSM 16553 / LMG 16656 / NCTC 13227 / J2315 / CF5610) (Burkholderia cepacia (strain J2315)) protein is Large ribosomal subunit protein uL13.